The sequence spans 144 residues: Putative acetyltransferase SAOUHSC_00995 (144 aa).

The N-acetyltransferase domain occupies 1–141; it reads MFSKVNNQKM…EHIEMTKKLT (141 aa). CoA is bound by residues 71–73, G79, and 112–114; these read VAV and PFY.

It belongs to the UPF0039 (ElaA) family.

Its function is as follows. Could catalyze the transfer of an acetyl group from acetyl coenzyme A (AcCoA) to an acceptor substrate and release both CoA and the acetylated product. The protein is Putative acetyltransferase SAOUHSC_00995 of Staphylococcus aureus (strain NCTC 8325 / PS 47).